Reading from the N-terminus, the 1531-residue chain is MALRGFCSADGSDPLWDWNVTWNTSNPDFTKCFQNTVLVWVPCFYLWACFPFYFLYLSRHDRGYIQMTPLNKTKTALGFLLWIVCWADLFYSFWERSRGIFLAPVFLVSPTLLGITMLLATFLIQLERRKGVQSSGIMLTFWLVALVCALAILRSKIMTALKEDAQVDLFRDITFYVYFSLLLIQLVLSCFSDRSPLFSETIHDPNPCPESSASFLSRITFWWITGLIVRGYRQPLEGSDLWSLNKEDTSEQVVPVLVKNWKKECAKTRKQPVKVVYSSKDPAQPKESSKVDANEEVEALIVKSPQKEWNPSLFKVLYKTFGPYFLMSFFFKAIHDLMMFSGPQILKLLIKFVNDTKAPDWQGYFYTVLLFVTACLQTLVLHQYFHICFVSGMRIKTAVIGAVYRKALVITNSARKSSTVGEIVNLMSVDAQRFMDLATYINMIWSAPLQVILALYLLWLNLGPSVLAGVAVMVLMVPVNAVMAMKTKTYQVAHMKSKDNRIKLMNEILNGIKVLKLYAWELAFKDKVLAIRQEELKVLKKSAYLSAVGTFTWVCTPFLVALCTFAVYVTIDENNILDAQTAFVSLALFNILRFPLNILPMVISSIVQASVSLKRLRIFLSHEELEPDSIERRPVKDGGGTNSITVRNATFTWARSDPPTLNGITFSIPEGALVAVVGQVGCGKSSLLSALLAEMDKVEGHVAIKGSVAYVPQQAWIQNDSLRENILFGCQLEEPYYRSVIQACALLPDLEILPSGDRTEIGEKGVNLSGGQKQRVSLARAVYSNADIYLFDDPLSAVDAHVGKHIFENVIGPKGMLKNKTRILVTHSMSYLPQVDVIIVMSGGKISEMGSYQELLARDGAFAEFLRTYASTEQEQDAEENGVTGVSGPGKEAKQMENGMLVTDSAGKQLQRQLSSSSSYSGDISRHHNSTAELQKAEAKKEETWKLMEADKAQTGQVKLSVYWDYMKAIGLFISFLSIFLFMCNHVSALASNYWLSLWTDDPIVNGTQEHTKVRLSVYGALGISQGIAVFGYSMAVSIGGILASRCLHVDLLHSILRSPMSFFERTPSGNLVNRFSKELDTVDSMIPEVIKMFMGSLFNVIGACIVILLATPIAAIIIPPLGLIYFFVQRFYVASSRQLKRLESVSRSPVYSHFNETLLGVSVIRAFEEQERFIHQSDLKVDENQKAYYPSIVANRWLAVRLECVGNCIVLFAALFAVISRHSLSAGLVGLSVSYSLQVTTYLNWLVRMSSEMETNIVAVERLKEYSETEKEAPWQIQETAPPSSWPQVGRVEFRNYCLRYREDLDFVLRHINVTINGGEKVGIVGRTGAGKSSLTLGLFRINESAEGEIIIDGINIAKIGLHDLRFKITIIPQDPVLFSGSLRMNLDPFSQYSDEEVWTSLELAHLKDFVSALPDKLDHECAEGGENLSVGQRQLVCLARALLRKTKILVLDEATAAVDLETDDLIQSTIRTQFEDCTVLTIAHRLNTIMDYTRVIVLDKGEIQEYGAPSDLLQQRGLFYSMAKDAGLV.

At 1-33 (MALRGFCSADGSDPLWDWNVTWNTSNPDFTKCF) the chain is on the extracellular side. Residues N19 and N23 are each glycosylated (N-linked (GlcNAc...) asparagine). The chain crosses the membrane as a helical span at residues 34 to 54 (QNTVLVWVPCFYLWACFPFYF). The Cytoplasmic segment spans residues 55–74 (LYLSRHDRGYIQMTPLNKTK). A helical transmembrane segment spans residues 75 to 95 (TALGFLLWIVCWADLFYSFWE). Topologically, residues 96–100 (RSRGI) are extracellular. The chain crosses the membrane as a helical span at residues 101 to 121 (FLAPVFLVSPTLLGITMLLAT). Residues 122–133 (FLIQLERRKGVQ) lie on the Cytoplasmic side of the membrane. Residues 134-154 (SSGIMLTFWLVALVCALAILR) traverse the membrane as a helical segment. Residues 155-172 (SKIMTALKEDAQVDLFRD) are Extracellular-facing. Residues 173 to 193 (ITFYVYFSLLLIQLVLSCFSD) form a helical membrane-spanning segment. Topologically, residues 194 to 316 (RSPLFSETIH…KEWNPSLFKV (123 aa)) are cytoplasmic. The residue at position 277 (Y277) is a Phosphotyrosine. Residue S289 is modified to Phosphoserine. The helical transmembrane segment at 317–337 (LYKTFGPYFLMSFFFKAIHDL) threads the bilayer. Residues 325–608 (FLMSFFFKAI…LPMVISSIVQ (284 aa)) form the ABC transmembrane type-1 1 domain. At 338–363 (MMFSGPQILKLLIKFVNDTKAPDWQG) the chain is on the extracellular side. Residues 364–384 (YFYTVLLFVTACLQTLVLHQY) form a helical membrane-spanning segment. The Cytoplasmic segment spans residues 385 to 440 (FHICFVSGMRIKTAVIGAVYRKALVITNSARKSSTVGEIVNLMSVDAQRFMDLATY). A helical membrane pass occupies residues 441–461 (INMIWSAPLQVILALYLLWLN). At 462–464 (LGP) the chain is on the extracellular side. A helical transmembrane segment spans residues 465-485 (SVLAGVAVMVLMVPVNAVMAM). The Cytoplasmic segment spans residues 486 to 547 (KTKTYQVAHM…VLKKSAYLSA (62 aa)). An N6-succinyllysine modification is found at K503. Residues 548 to 568 (VGTFTWVCTPFLVALCTFAVY) traverse the membrane as a helical segment. Topologically, residues 569 to 590 (VTIDENNILDAQTAFVSLALFN) are extracellular. A helical transmembrane segment spans residues 591-611 (ILRFPLNILPMVISSIVQASV). The Cytoplasmic portion of the chain corresponds to 612 to 967 (SLKRLRIFLS…VKLSVYWDYM (356 aa)). In terms of domain architecture, ABC transporter 1 spans 644 to 868 (ITVRNATFTW…DGAFAEFLRT (225 aa)). ATP is bound by residues W653, 678-685 (GQVGCGKS), and Q713. A phosphoserine mark is found at S905, S915, and S930. A helical membrane pass occupies residues 968–988 (KAIGLFISFLSIFLFMCNHVS). Residues 975 to 1256 (SFLSIFLFMC…LVRMSSEMET (282 aa)) enclose the ABC transmembrane type-1 2 domain. Residues 989-1025 (ALASNYWLSLWTDDPIVNGTQEHTKVRLSVYGALGIS) are Extracellular-facing. The N-linked (GlcNAc...) asparagine glycan is linked to N1006. The helical transmembrane segment at 1026–1046 (QGIAVFGYSMAVSIGGILASR) threads the bilayer. Over 1047–1089 (CLHVDLLHSILRSPMSFFERTPSGNLVNRFSKELDTVDSMIPE) the chain is Cytoplasmic. Residues 1090-1110 (VIKMFMGSLFNVIGACIVILL) traverse the membrane as a helical segment. Residue A1111 is a topological domain, extracellular. Residues 1112 to 1132 (TPIAAIIIPPLGLIYFFVQRF) traverse the membrane as a helical segment. Over 1133–1203 (YVASSRQLKR…VANRWLAVRL (71 aa)) the chain is Cytoplasmic. Residues 1204 to 1224 (ECVGNCIVLFAALFAVISRHS) form a helical membrane-spanning segment. Over 1225–1226 (LS) the chain is Extracellular. The chain crosses the membrane as a helical span at residues 1227–1247 (AGLVGLSVSYSLQVTTYLNWL). Over 1248–1531 (VRMSSEMETN…YSMAKDAGLV (284 aa)) the chain is Cytoplasmic. In terms of domain architecture, ABC transporter 2 spans 1293–1527 (VEFRNYCLRY…RGLFYSMAKD (235 aa)). Position 1327-1334 (1327-1334 (GRTGAGKS)) interacts with ATP.

The protein belongs to the ABC transporter superfamily. ABCC family. Conjugate transporter (TC 3.A.1.208) subfamily. (Microbial infection) Interacts with human cytomegalovirus protein UL138; this interaction mediates MRP1 degradation via the lysosome. Lung, testis and peripheral blood mononuclear cells.

It localises to the cell membrane. Its subcellular location is the basolateral cell membrane. It carries out the reaction ATP + H2O + xenobioticSide 1 = ADP + phosphate + xenobioticSide 2.. The catalysed reaction is an S-substituted glutathione(in) + ATP + H2O = an S-substituted glutathione(out) + ADP + phosphate + H(+). It catalyses the reaction sphing-4-enine 1-phosphate(in) + ATP + H2O = sphing-4-enine 1-phosphate(out) + ADP + phosphate + H(+). The enzyme catalyses leukotriene C4(in) + ATP + H2O = leukotriene C4(out) + ADP + phosphate + H(+). It carries out the reaction 17beta-estradiol 17-O-(beta-D-glucuronate)(in) + ATP + H2O = 17beta-estradiol 17-O-(beta-D-glucuronate)(out) + ADP + phosphate + H(+). The catalysed reaction is daunorubicin(in) + ATP + H2O = daunorubicin(out) + ADP + phosphate + H(+). It catalyses the reaction vincristine(in) + ATP + H2O = vincristine(out) + ADP + phosphate + H(+). The enzyme catalyses 2',3'-cGAMP(in) + ATP + H2O = 2',3'-cGAMP(out) + ADP + phosphate + H(+). It carries out the reaction S-[(2E,6E,10E)-geranylgeranyl]-L-glutathione(in) + ATP + H2O = S-[(2E,6E,10E)-geranylgeranyl]-L-glutathione(out) + ADP + phosphate + H(+). The catalysed reaction is prostaglandin A2-S-(R)-glutathione(in) + ATP + H2O = prostaglandin A2-S-(R)-glutathione(out) + ADP + phosphate + H(+). It catalyses the reaction prostaglandin A2-S-(S)-glutathione(in) + ATP + H2O = prostaglandin A2-S-(S)-glutathione(out) + ADP + phosphate + H(+). MK 571 inhibits sphingosine 1-phosphate and leukotriene C4 export. Mediates export of organic anions and drugs from the cytoplasm. Mediates ATP-dependent transport of glutathione and glutathione conjugates, leukotriene C4, estradiol-17-beta-o-glucuronide, methotrexate, antiviral drugs and other xenobiotics. Confers resistance to anticancer drugs by decreasing accumulation of drug in cells, and by mediating ATP- and GSH-dependent drug export. Hydrolyzes ATP with low efficiency. Catalyzes the export of sphingosine 1-phosphate from mast cells independently of their degranulation. Participates in inflammatory response by allowing export of leukotriene C4 from leukotriene C4-synthesizing cells. Mediates ATP-dependent, GSH-independent cyclic GMP-AMP (cGAMP) export. Thus, by limiting intracellular cGAMP concentrations negatively regulates the cGAS-STING pathway. Exports S-geranylgeranyl-glutathione (GGG) in lymphoid cells and stromal compartments of lymphoid organs. ABCC1 (via extracellular transport) with GGT5 (via GGG catabolism) establish GGG gradients within lymphoid tissues to position P2RY8-positive lymphocytes at germinal centers in lymphoid follicles and restrict their chemotactic transmigration from blood vessels to the bone marrow parenchyma. Mediates basolateral export of GSH-conjugated R- and S-prostaglandin A2 diastereomers in polarized epithelial cells. This is Multidrug resistance-associated protein 1 from Homo sapiens (Human).